Here is a 124-residue protein sequence, read N- to C-terminus: Phosphoribosyl-ATP pyrophosphatase (124 aa).

Belongs to the PRA-PH family.

It is found in the cytoplasm. It carries out the reaction 1-(5-phospho-beta-D-ribosyl)-ATP + H2O = 1-(5-phospho-beta-D-ribosyl)-5'-AMP + diphosphate + H(+). It participates in amino-acid biosynthesis; L-histidine biosynthesis; L-histidine from 5-phospho-alpha-D-ribose 1-diphosphate: step 2/9. In Ralstonia nicotianae (strain ATCC BAA-1114 / GMI1000) (Ralstonia solanacearum), this protein is Phosphoribosyl-ATP pyrophosphatase (hisE).